A 1166-amino-acid chain; its full sequence is Lethal(2) giant larvae protein (1166 aa).

WD repeat units lie at residues 39–72, 82–128, 131–167, 189–223, 231–263, 278–320, 328–358, 380–464, 513–595, 604–665, 709–779, 788–833, 838–928, and 942–965; these read SALA…LYAQ, ELNV…DGKL, VSSL…EPVI, SIRQ…ERAY, SVGL…GEPP, SINR…GHKV, VIDF…AYDL, TCNY…YNFK, KKIA…TGVL, TCMA…LRES, VRCL…KEIQ, GISI…LKPI, LTAN…LNAA, and CFTN…ALST. Residues 867–888 are disordered; sequence HSGSPTKSVRSHGEGDGAGNVS. Disordered regions lie at residues 975-1002 and 1144-1166; these read VEVE…KDGE and HEKT…ESQF.

The protein belongs to the WD repeat L(2)GL family. As to quaternary structure, may form multimeric complexes. Interacts with mahj. Interacts with aPKC; the interaction results in phosphorylation of l(2)gl. Interacts with ball. Phosphorylated by aPKC which restricts l(2)gl activity to the oocyte posterior and is required for oocyte polarity formation. As to expression, expressed in the epithelial cells of the digestive tract and in gonads, in the ovary's nurse and oocyte's follicle cells.

The protein resides in the cell membrane. The protein localises to the secreted. Its subcellular location is the extracellular space. It localises to the extracellular matrix. In terms of biological role, essential for the development of polarized epithelia, for cell polarity associated with asymmetric cell division of neuroblasts during development, and for oocyte polarity formation. Promotes the formation of actin-rich projections at the oocyte cortex and the posterior enrichment of par-1 which is required for oocyte polarization. Regulates the localization of axis-specifying morphogens such as stau and grk. Could act as a tumor suppressor. The polypeptide is Lethal(2) giant larvae protein (l(2)gl) (Drosophila pseudoobscura pseudoobscura (Fruit fly)).